The primary structure comprises 545 residues: CTP synthase (545 aa).

An amidoligase domain region spans residues 1–266 (MTTKYIFVTG…DSYFTERFGL (266 aa)). Position 14 (Ser-14) interacts with CTP. Ser-14 contacts UTP. Residues 15 to 20 (SLGKGI) and Asp-72 contribute to the ATP site. Asp-72 and Glu-140 together coordinate Mg(2+). Residues 147–149 (DIE), 187–192 (KTKPTQ), and Lys-223 contribute to the CTP site. UTP contacts are provided by residues 187–192 (KTKPTQ) and Lys-223. 239-241 (KDV) is an ATP binding site. A Glutamine amidotransferase type-1 domain is found at 291–542 (TIGMVGKYVS…VKAAGEYQKR (252 aa)). Residue Gly-352 coordinates L-glutamine. Cys-379 acts as the Nucleophile; for glutamine hydrolysis in catalysis. L-glutamine-binding positions include 380-383 (LGMQ), Glu-403, and Arg-470. Catalysis depends on residues His-515 and Glu-517.

It belongs to the CTP synthase family. In terms of assembly, homotetramer.

It carries out the reaction UTP + L-glutamine + ATP + H2O = CTP + L-glutamate + ADP + phosphate + 2 H(+). It catalyses the reaction L-glutamine + H2O = L-glutamate + NH4(+). The enzyme catalyses UTP + NH4(+) + ATP = CTP + ADP + phosphate + 2 H(+). It functions in the pathway pyrimidine metabolism; CTP biosynthesis via de novo pathway; CTP from UDP: step 2/2. Its activity is regulated as follows. Allosterically activated by GTP, when glutamine is the substrate; GTP has no effect on the reaction when ammonia is the substrate. The allosteric effector GTP functions by stabilizing the protein conformation that binds the tetrahedral intermediate(s) formed during glutamine hydrolysis. Inhibited by the product CTP, via allosteric rather than competitive inhibition. Its function is as follows. Catalyzes the ATP-dependent amination of UTP to CTP with either L-glutamine or ammonia as the source of nitrogen. Regulates intracellular CTP levels through interactions with the four ribonucleotide triphosphates. This chain is CTP synthase, found in Aeromonas hydrophila subsp. hydrophila (strain ATCC 7966 / DSM 30187 / BCRC 13018 / CCUG 14551 / JCM 1027 / KCTC 2358 / NCIMB 9240 / NCTC 8049).